The chain runs to 377 residues: Erythronate-4-phosphate dehydrogenase (377 aa).

Positions 45 and 67 each coordinate substrate. NAD(+) contacts are provided by residues 127-128 (QV), Asp-147, and Thr-176. Arg-209 is an active-site residue. Asp-233 contributes to the NAD(+) binding site. Glu-238 is an active-site residue. His-255 (proton donor) is an active-site residue. Gly-258 serves as a coordination point for NAD(+). Substrate is bound at residue Tyr-259.

This sequence belongs to the D-isomer specific 2-hydroxyacid dehydrogenase family. PdxB subfamily. As to quaternary structure, homodimer.

It is found in the cytoplasm. The catalysed reaction is 4-phospho-D-erythronate + NAD(+) = (R)-3-hydroxy-2-oxo-4-phosphooxybutanoate + NADH + H(+). Its pathway is cofactor biosynthesis; pyridoxine 5'-phosphate biosynthesis; pyridoxine 5'-phosphate from D-erythrose 4-phosphate: step 2/5. Functionally, catalyzes the oxidation of erythronate-4-phosphate to 3-hydroxy-2-oxo-4-phosphonooxybutanoate. This chain is Erythronate-4-phosphate dehydrogenase, found in Vibrio atlanticus (strain LGP32) (Vibrio splendidus (strain Mel32)).